A 360-amino-acid chain; its full sequence is Coiled-coil domain-containing protein 86 (360 aa).

Residues 1 to 12 (MDTPLRRSRRLG) show a composition bias toward basic residues. Disordered regions lie at residues 1–314 (MDTP…ENER) and 328–360 (LKRA…AAKI). 5 positions are modified to phosphoserine: serine 21, serine 24, serine 47, serine 50, and serine 58. The residue at position 65 (threonine 65) is a Phosphothreonine. Phosphoserine is present on residues serine 66, serine 69, serine 80, serine 91, serine 102, serine 110, serine 113, and serine 128. Residues 66–83 (SPGSPRLQQGSGLESPQG) are compositionally biased toward polar residues. Positions 153–164 (QLPPVPGSPEPY) are enriched in pro residues. Phosphoserine is present on residues serine 188, serine 217, and serine 218. Residues 238 to 254 (GKPKSGRVWKDRSKKRF) show a composition bias toward basic residues. A coiled-coil region spans residues 272–323 (KERQERKLAKDFARHLEEEKERRRQEKKQRRAENLKRRLENERKAEVVQVIR). 2 stretches are compositionally biased toward basic and acidic residues: residues 273–295 (ERQE…ERRR) and 302–314 (RAEN…ENER). Arginine 342 bears the Citrulline mark.

Post-translationally, citrullinated by PADI4.

The protein localises to the nucleus. It localises to the chromosome. The protein resides in the nucleolus. Functionally, required for proper chromosome segregation during mitosis and error-free mitotic progression. The chain is Coiled-coil domain-containing protein 86 from Pongo abelii (Sumatran orangutan).